The following is a 799-amino-acid chain: Dipeptidyl peptidase family member 1 (799 aa).

Residues 1–31 (MTAEADLLEGYDEELGGNESQKRDCKGITTA) lie on the Cytoplasmic side of the membrane. A helical; Signal-anchor for type II membrane protein membrane pass occupies residues 32 to 52 (IVVVLLILVMIFAALVFFTPL). Over 53-799 (FAAKSFGSWR…FLRQCFYTDK (747 aa)) the chain is Lumenal. 4 N-linked (GlcNAc...) asparagine glycosylation sites follow: N64, N138, N267, and N335. C474 and C477 form a disulfide bridge. A glycan (N-linked (GlcNAc...) asparagine) is linked at N481. C482 and C500 form a disulfide bridge. N512 carries N-linked (GlcNAc...) asparagine glycosylation. Active-site charge relay system residues include S669, D742, and H774. Cysteines 689 and 794 form a disulfide.

The protein belongs to the peptidase S9B family. DPPIV subfamily.

It is found in the cell membrane. Its function is as follows. Removes N-terminal dipeptides sequentially from polypeptides. Essential for control of distal tip cell migration. The chain is Dipeptidyl peptidase family member 1 (dpf-1) from Caenorhabditis elegans.